Reading from the N-terminus, the 425-residue chain is Cytokine receptor-like factor 1 (425 aa).

The signal sequence occupies residues 1–33 (MPAGRPGPVAQSARRPPRPLSSLWSPLLLCVLG). The Ig-like C2-type domain occupies 35–134 (PRGGSGAHTA…SILAGSCLYV (100 aa)). Residues N95, N107, and N143 are each glycosylated (N-linked (GlcNAc...) asparagine). Fibronectin type-III domains are found at residues 140-235 (KPFN…VLDV) and 240-344 (PPPD…TPRS). C146 and C156 are disulfide-bonded. N-linked (GlcNAc...) asparagine glycosylation occurs at N171. C187 and C198 are joined by a disulfide. S222 is modified (phosphoserine). N295 carries an N-linked (GlcNAc...) asparagine glycan. Residues 330–334 (WSEWS) carry the WSXWS motif motif. Residues 335-366 (HPTAASTPRSERPGPGGGVCEPRGGEPSSGPV) form a disordered region. Residue N385 is glycosylated (N-linked (GlcNAc...) asparagine). The interval 402 to 425 (HKTRNQDEGILPSGRRGAARGPAG) is disordered. Residues 415–425 (GRRGAARGPAG) show a composition bias toward low complexity.

Belongs to the type I cytokine receptor family. Type 3 subfamily. As to quaternary structure, forms covalent di- and tetramers. Forms a heteromeric complex with cardiotrophin-like cytokine CLCF1/CLC; the CRLF1-CLCF1 complex is a ligand for the ciliary neurotrophic factor receptor/CNTFR. The CRLF1-CLCF1 heterodimer, as well as tripartite signaling complex formed by CRLF1, CLCF1 and CNTFR bind SORL1 (via N-terminal ectodomain); within this complex, the interaction is mediated predominantly by the CRLF1 moiety. In terms of tissue distribution, widely expressed in the embryo. Not detected in the brain of adult mice.

It is found in the secreted. Its function is as follows. In complex with CLCF1, forms a heterodimeric neurotropic cytokine that plays a crucial role during neuronal development. Plays a role in the initiation and/or maintenance of suckling in neonatal mice. May also play a regulatory role in the immune system. The sequence is that of Cytokine receptor-like factor 1 (Crlf1) from Mus musculus (Mouse).